Reading from the N-terminus, the 721-residue chain is BBSome complex member BBS2 (721 aa).

Residues 325-369 adopt a coiled-coil conformation; sequence KGNLLDTSVEQGLIRELSQKKQNLLLELRNYEENTKAELSSPLNE.

In terms of assembly, part of BBSome complex, that contains BBS1, BBS2, BBS4, BBS5, BBS7, BBS8/TTC8, BBS9 and BBIP10. Interacts (via C-terminus) with BBS7. Interacts (via coiled coil domain) with MKKS. Interacts with CCDC28B. Interacts with DLEC1.

The protein localises to the cell projection. The protein resides in the cilium membrane. It is found in the cytoplasm. Its subcellular location is the cytoskeleton. It localises to the microtubule organizing center. The protein localises to the centrosome. The protein resides in the centriolar satellite. The BBSome complex is thought to function as a coat complex required for sorting of specific membrane proteins to the primary cilia. The BBSome complex is required for ciliogenesis but is dispensable for centriolar satellite function. This ciliogenic function is mediated in part by the Rab8 GDP/GTP exchange factor, which localizes to the basal body and contacts the BBSome. Rab8(GTP) enters the primary cilium and promotes extension of the ciliary membrane. Firstly the BBSome associates with the ciliary membrane and binds to RAB3IP/Rabin8, the guanosyl exchange factor (GEF) for Rab8 and then the Rab8-GTP localizes to the cilium and promotes docking and fusion of carrier vesicles to the base of the ciliary membrane. The BBSome complex, together with the LTZL1, controls SMO ciliary trafficking and contributes to the sonic hedgehog (SHH) pathway regulation. Required for proper BBSome complex assembly and its ciliary localization. The protein is BBSome complex member BBS2 (Bbs2) of Rattus norvegicus (Rat).